We begin with the raw amino-acid sequence, 184 residues long: NADH-quinone oxidoreductase subunit B (184 aa).

[4Fe-4S] cluster contacts are provided by Cys-37, Cys-38, Cys-103, and Cys-132.

This sequence belongs to the complex I 20 kDa subunit family. In terms of assembly, NDH-1 is composed of 14 different subunits. Subunits NuoB, C, D, E, F, and G constitute the peripheral sector of the complex. Requires [4Fe-4S] cluster as cofactor.

The protein localises to the cell membrane. The catalysed reaction is a quinone + NADH + 5 H(+)(in) = a quinol + NAD(+) + 4 H(+)(out). NDH-1 shuttles electrons from NADH, via FMN and iron-sulfur (Fe-S) centers, to quinones in the respiratory chain. The immediate electron acceptor for the enzyme in this species is believed to be a menaquinone. Couples the redox reaction to proton translocation (for every two electrons transferred, four hydrogen ions are translocated across the cytoplasmic membrane), and thus conserves the redox energy in a proton gradient. This is NADH-quinone oxidoreductase subunit B from Mycolicibacterium vanbaalenii (strain DSM 7251 / JCM 13017 / BCRC 16820 / KCTC 9966 / NRRL B-24157 / PYR-1) (Mycobacterium vanbaalenii).